Consider the following 293-residue polypeptide: ATP synthase subunit a (293 aa).

The next 8 membrane-spanning stretches (helical) occupy residues 39-59, 73-93, 102-122, 128-148, 172-192, 198-218, 224-244, and 245-265; these read QVFG…VYWI, FVLL…DLIG, YFLM…LGGI, SLTF…IMGI, TLIP…SISL, ILGG…AFST, LALS…HVYF, and DVVV…NYWA.

It belongs to the ATPase A chain family. F-type ATPases have 2 components, CF(1) - the catalytic core - and CF(0) - the membrane proton channel. CF(1) has five subunits: alpha(3), beta(3), gamma(1), delta(1), epsilon(1). CF(0) has three main subunits: a(1), b(2) and c(9-12). The alpha and beta chains form an alternating ring which encloses part of the gamma chain. CF(1) is attached to CF(0) by a central stalk formed by the gamma and epsilon chains, while a peripheral stalk is formed by the delta and b chains.

The protein localises to the cell membrane. Its function is as follows. Key component of the proton channel; it plays a direct role in the translocation of protons across the membrane. In Mycoplasma pneumoniae (strain ATCC 29342 / M129 / Subtype 1) (Mycoplasmoides pneumoniae), this protein is ATP synthase subunit a.